The chain runs to 173 residues: Lectin BRA-2 (173 aa).

An N-linked (GlcNAc...) asparagine glycan is attached at N39. Disulfide bonds link C47–C61, C78–C168, and C144–C160. One can recognise a C-type lectin domain in the interval 51 to 170 (PNGWVTSENK…NDRYNFVCEI (120 aa)).

As to quaternary structure, homohexamer; disulfide-linked. As to expression, coelemic fluid.

Functionally, sugar-binding protein which recognizes specific carbohydrate structures and agglutinates a variety of animal cells by binding to cell-surface glycoproteins and glycolipids. Calcium-dependent lectin. Invertebrate lectins may be involved in defense functions. This Megabalanus rosa (Acorn barnacle) protein is Lectin BRA-2.